Here is a 461-residue protein sequence, read N- to C-terminus: Bifunctional protein GlmU (461 aa).

The tract at residues 1 to 230 is pyrophosphorylase; it reads MECLMAVILA…SSEILGINDR (230 aa). UDP-N-acetyl-alpha-D-glucosamine is bound by residues 9-12, Lys-23, Gln-73, 78-79, 101-103, Gly-140, Glu-155, Asn-170, and Asn-228; these read LAAG, GT, and YGD. Residue Asp-103 participates in Mg(2+) binding. Asn-228 is a Mg(2+) binding site. A linker region spans residues 231–251; sequence VQLAEAGRIIRSRILKRHMKN. The N-acetyltransferase stretch occupies residues 252 to 461; that stretch reads GVTIIDPDST…KKGMLRQEKE (210 aa). UDP-N-acetyl-alpha-D-glucosamine contacts are provided by Arg-333 and Lys-351. His-363 acts as the Proton acceptor in catalysis. UDP-N-acetyl-alpha-D-glucosamine is bound by residues Tyr-366 and Asn-377. Residues 386 to 387, Ala-423, and Arg-440 contribute to the acetyl-CoA site; that span reads NY.

This sequence in the N-terminal section; belongs to the N-acetylglucosamine-1-phosphate uridyltransferase family. In the C-terminal section; belongs to the transferase hexapeptide repeat family. As to quaternary structure, homotrimer. Mg(2+) serves as cofactor.

The protein resides in the cytoplasm. The enzyme catalyses alpha-D-glucosamine 1-phosphate + acetyl-CoA = N-acetyl-alpha-D-glucosamine 1-phosphate + CoA + H(+). It catalyses the reaction N-acetyl-alpha-D-glucosamine 1-phosphate + UTP + H(+) = UDP-N-acetyl-alpha-D-glucosamine + diphosphate. It participates in nucleotide-sugar biosynthesis; UDP-N-acetyl-alpha-D-glucosamine biosynthesis; N-acetyl-alpha-D-glucosamine 1-phosphate from alpha-D-glucosamine 6-phosphate (route II): step 2/2. It functions in the pathway nucleotide-sugar biosynthesis; UDP-N-acetyl-alpha-D-glucosamine biosynthesis; UDP-N-acetyl-alpha-D-glucosamine from N-acetyl-alpha-D-glucosamine 1-phosphate: step 1/1. Its pathway is bacterial outer membrane biogenesis; LPS lipid A biosynthesis. Functionally, catalyzes the last two sequential reactions in the de novo biosynthetic pathway for UDP-N-acetylglucosamine (UDP-GlcNAc). The C-terminal domain catalyzes the transfer of acetyl group from acetyl coenzyme A to glucosamine-1-phosphate (GlcN-1-P) to produce N-acetylglucosamine-1-phosphate (GlcNAc-1-P), which is converted into UDP-GlcNAc by the transfer of uridine 5-monophosphate (from uridine 5-triphosphate), a reaction catalyzed by the N-terminal domain. The chain is Bifunctional protein GlmU from Acetivibrio thermocellus (strain ATCC 27405 / DSM 1237 / JCM 9322 / NBRC 103400 / NCIMB 10682 / NRRL B-4536 / VPI 7372) (Clostridium thermocellum).